A 1412-amino-acid chain; its full sequence is DNA-directed RNA polymerase subunit beta (1412 aa).

This sequence belongs to the RNA polymerase beta chain family. As to quaternary structure, the RNAP catalytic core consists of 2 alpha, 1 beta, 1 beta' and 1 omega subunit. When a sigma factor is associated with the core the holoenzyme is formed, which can initiate transcription.

The catalysed reaction is RNA(n) + a ribonucleoside 5'-triphosphate = RNA(n+1) + diphosphate. DNA-dependent RNA polymerase catalyzes the transcription of DNA into RNA using the four ribonucleoside triphosphates as substrates. This is DNA-directed RNA polymerase subunit beta from Bdellovibrio bacteriovorus (strain ATCC 15356 / DSM 50701 / NCIMB 9529 / HD100).